Here is a 447-residue protein sequence, read N- to C-terminus: NADH-quinone oxidoreductase subunit N (447 aa).

A run of 13 helical transmembrane segments spans residues 4-24, 27-47, 68-88, 92-112, 113-133, 146-166, 181-201, 215-235, 245-265, 280-300, 302-322, 342-362, and 376-395; these read FAAL…MLAA, LPGL…VALA, LTGL…RPDG, EGPA…GAVH, AASL…LFVL, FLIL…LGHA, ALLT…LALV, PGAA…TALV, VWAL…NLAA, VGHA…APAA, LFYI…AALI, GAAM…AGFF, and AWAL…YYYL.

The protein belongs to the complex I subunit 2 family. As to quaternary structure, NDH-1 is composed of 14 different subunits. Subunits NuoA, H, J, K, L, M, N constitute the membrane sector of the complex.

It is found in the cell inner membrane. The enzyme catalyses a quinone + NADH + 5 H(+)(in) = a quinol + NAD(+) + 4 H(+)(out). In terms of biological role, NDH-1 shuttles electrons from NADH, via FMN and iron-sulfur (Fe-S) centers, to quinones in the respiratory chain. The immediate electron acceptor for the enzyme in this species is believed to be ubiquinone. Couples the redox reaction to proton translocation (for every two electrons transferred, four hydrogen ions are translocated across the cytoplasmic membrane), and thus conserves the redox energy in a proton gradient. This is NADH-quinone oxidoreductase subunit N from Cereibacter sphaeroides (strain ATCC 17025 / ATH 2.4.3) (Rhodobacter sphaeroides).